The chain runs to 291 residues: Protease HtpX homolog (291 aa).

The next 2 membrane-spanning stretches (helical) occupy residues 4–24 (IVLF…SARL) and 38–58 (MGML…ISLM). Histidine 144 contacts Zn(2+). Glutamate 145 is an active-site residue. Histidine 148 lines the Zn(2+) pocket. Transmembrane regions (helical) follow at residues 152–172 (GDMV…IFLA) and 199–219 (VSSI…VMFF). A Zn(2+)-binding site is contributed by glutamate 224.

It belongs to the peptidase M48B family. Zn(2+) is required as a cofactor.

Its subcellular location is the cell inner membrane. This is Protease HtpX homolog from Prosthecochloris aestuarii (strain DSM 271 / SK 413).